Reading from the N-terminus, the 313-residue chain is Non-structural protein 3 (313 aa).

Positions 1 to 149 (MLKMESTQQM…TRLMKDKIEG (149 aa)) are RNA-binding. The tract at residues 150 to 206 (GEVEVDDSYVDEKMEIDTIDWKSRYDQLEKRFEALKQRVNEKYNTWVQKAKKVNENM) is dimerization. The stretch at 166-237 (DTIDWKSRYD…NKLEADLQGK (72 aa)) forms a coiled coil. The tract at residues 170-234 (WKSRYDQLEK…QYCNKLEADL (65 aa)) is interaction with host ZC3H7B. The segment at 208–313 (SLQNVISQQQ…KQCNYEYAYE (106 aa)) is interaction with host EIF4G1.

It belongs to the rotavirus NSP3 family. In terms of assembly, homodimer. Interacts (via the coiled-coil region) with host ZC3H7B (via LD motif). Interacts with host EIF4G1.

The protein resides in the host cytoplasm. Functionally, plays an important role in stimulating the translation of viral mRNAs. These mRNAs are capped but not polyadenylated, instead terminating in a conserved sequence 'GACC' at the 3' that is recognized by NSP3, which competes with host PABPC1 for EIF4G1 binding. The interaction between NSP3 and host EIF4G1 stabilizes the EIF4E-EIF4G1 interaction, thereby facilitating the initiation of capped mRNA translation. This Homo sapiens (Human) protein is Non-structural protein 3.